The following is a 61-amino-acid chain: Rubredoxin 3 (61 aa).

One can recognise a Rubredoxin-like domain in the interval 1-53; it reads MSSYRCPVCEYVYDESKGAPREGFPAGTPWDAVPDDWCCPDCGVREKLDFEPM. The Fe cation site is built by cysteine 6, cysteine 9, cysteine 39, and cysteine 42.

Belongs to the rubredoxin family. Requires Fe(3+) as cofactor.

In terms of biological role, involved in the hydrocarbon hydroxylating system, which transfers electrons from NADH to rubredoxin reductase and then through rubredoxin to alkane 1 monooxygenase. The sequence is that of Rubredoxin 3 (rubA3) from Rhodococcus erythropolis (Arthrobacter picolinophilus).